Here is a 246-residue protein sequence, read N- to C-terminus: Small ribosomal subunit protein uS2 (246 aa).

The protein belongs to the universal ribosomal protein uS2 family.

In Dictyoglomus turgidum (strain DSM 6724 / Z-1310), this protein is Small ribosomal subunit protein uS2.